We begin with the raw amino-acid sequence, 676 residues long: Nicastrin (676 aa).

The signal sequence occupies residues 1–28 (MAMGLIRLLSIAFTLVLLSILPLHLSLA). Residues 29–644 (DEITSIESVP…VYTVQHSAYD (616 aa)) are Extracellular-facing. N-linked (GlcNAc...) asparagine glycosylation is found at Asn58, Asn336, Asn371, Asn444, Asn480, Asn555, and Asn611. A helical membrane pass occupies residues 645 to 665 (NAVLVAGITVTTLAYIGILAA). The Cytoplasmic portion of the chain corresponds to 666-676 (KSIITKALKQD).

It belongs to the nicastrin family. As to quaternary structure, probable component of the gamma-secretase complex, a complex composed of a presenilin homodimer, nicastrin, APH1 and PEN2.

The protein localises to the membrane. Probable subunit of the gamma-secretase complex, an endoprotease complex that catalyzes the intramembrane cleavage of integral membrane proteins such as Notch. The protein is Nicastrin of Arabidopsis thaliana (Mouse-ear cress).